A 391-amino-acid polypeptide reads, in one-letter code: RAB6A-GEF complex partner protein 2 (391 aa).

The protein belongs to the RGP1 family. Forms a complex with RIC1; the interaction enhances RAB6A GTPase activity. Interacts with RIC1. Interacts with RAB6A; the interaction is direct with a preference for RAB6A-GDP. Interacts with RAB33B.

It localises to the cytoplasm. Its subcellular location is the cytosol. It is found in the membrane. Its function is as follows. The RIC1-RGP1 complex acts as a guanine nucleotide exchange factor (GEF), which activates RAB6A by exchanging bound GDP for free GTP and may thereby required for efficient fusion of endosome-derived vesicles with the Golgi compartment. The RIC1-RGP1 complex participates in the recycling of mannose-6-phosphate receptors. The protein is RAB6A-GEF complex partner protein 2 of Homo sapiens (Human).